The following is a 195-amino-acid chain: Imidazoleglycerol-phosphate dehydratase (195 aa).

This sequence belongs to the imidazoleglycerol-phosphate dehydratase family.

The protein localises to the cytoplasm. The enzyme catalyses D-erythro-1-(imidazol-4-yl)glycerol 3-phosphate = 3-(imidazol-4-yl)-2-oxopropyl phosphate + H2O. The protein operates within amino-acid biosynthesis; L-histidine biosynthesis; L-histidine from 5-phospho-alpha-D-ribose 1-diphosphate: step 6/9. The polypeptide is Imidazoleglycerol-phosphate dehydratase (Bordetella avium (strain 197N)).